The primary structure comprises 180 residues: Endoribonuclease YbeY (180 aa).

Zn(2+)-binding residues include histidine 118, histidine 122, and histidine 128.

Belongs to the endoribonuclease YbeY family. The cofactor is Zn(2+).

The protein resides in the cytoplasm. In terms of biological role, single strand-specific metallo-endoribonuclease involved in late-stage 70S ribosome quality control and in maturation of the 3' terminus of the 16S rRNA. This Rhodococcus opacus (strain B4) protein is Endoribonuclease YbeY.